A 298-amino-acid chain; its full sequence is Quinolinate synthase (298 aa).

The iminosuccinate site is built by His-19 and Ser-36. Cys-81 is a [4Fe-4S] cluster binding site. Residues 107–109 (YVN) and Ser-124 contribute to the iminosuccinate site. A [4Fe-4S] cluster-binding site is contributed by Cys-168. Iminosuccinate-binding positions include 193-195 (HPE) and Thr-210. Cys-254 serves as a coordination point for [4Fe-4S] cluster.

This sequence belongs to the quinolinate synthase family. Type 2 subfamily. It depends on [4Fe-4S] cluster as a cofactor.

It is found in the cytoplasm. The enzyme catalyses iminosuccinate + dihydroxyacetone phosphate = quinolinate + phosphate + 2 H2O + H(+). It functions in the pathway cofactor biosynthesis; NAD(+) biosynthesis; quinolinate from iminoaspartate: step 1/1. In terms of biological role, catalyzes the condensation of iminoaspartate with dihydroxyacetone phosphate to form quinolinate. The sequence is that of Quinolinate synthase from Thermotoga petrophila (strain ATCC BAA-488 / DSM 13995 / JCM 10881 / RKU-1).